A 420-amino-acid chain; its full sequence is MTLLALGINHKTAPVSLRERVTFSPESMDQALNSLLQQPLVQGGVVLSTCNRTELYLSVEQQENLHEQLTAWLCNYHKLSPDDVRQSLYWHHGNDAVRHLMRVASGLDSQVLGEPQILGQVKKAFAESQRGQSLSSELERLFQKSFSVAKRVRTETEIGASAVSVAFAACSLARQIFESLSELHVLLVGAGETIELVARHLREHQVKHMIIANRTRERAQSLASEVGAEVITLPEIDARLADADIIISSTASPLPIIGKGMVERALKTRRNQPMLFIDIAVPRDIEPEVGKLSNAYLYSVDDLQAIIQHNMAQRQAAAVQAESIVQQESMNFMTWLRAQGAVETIRDYRSQAEQVRSEMTAKALVAIEQGANVEQVINELAYKLTNRLIHAPTKSLQQAASDGDMERLQLLRDSLGLDQH.

Residues 49–52 (TCNR), S109, 114–116 (EPQ), and Q120 each bind substrate. The active-site Nucleophile is the C50. 189-194 (GAGETI) serves as a coordination point for NADP(+).

It belongs to the glutamyl-tRNA reductase family. In terms of assembly, homodimer.

The enzyme catalyses (S)-4-amino-5-oxopentanoate + tRNA(Glu) + NADP(+) = L-glutamyl-tRNA(Glu) + NADPH + H(+). It participates in porphyrin-containing compound metabolism; protoporphyrin-IX biosynthesis; 5-aminolevulinate from L-glutamyl-tRNA(Glu): step 1/2. In terms of biological role, catalyzes the NADPH-dependent reduction of glutamyl-tRNA(Glu) to glutamate 1-semialdehyde (GSA). The chain is Glutamyl-tRNA reductase from Yersinia pseudotuberculosis serotype O:1b (strain IP 31758).